A 319-amino-acid polypeptide reads, in one-letter code: MSPNGSDRSPRRPMRRKLLQALTAGLVLATATGCTYEDFPRLGMPTPTTEEAPRILSLWQGSWAAALATGVLVWGLILWSVFFHRRSRTKVEVPPQTRYNLPIEALYTMVPLVIVSVLFYFTARDESDLMSLNKKPDLTVNVVGFQWSWCFNHIEDVPGSTGDAKTSKELAGIPDRFIEDFPANAGGVYDCGTPGTENPQTGNPGPTLWLPKGKTVRFVLTSRDVIHSFWVVPFLMKQDVIPGHTNAFEVTPNKEGTFLGKCAELCGVDHSRMLFNVKVVSPERYEQHLQDLAKKGQTGYVPAGIAQTSHEKNRETNNL.

The first 33 residues, 1-33, serve as a signal peptide directing secretion; it reads MSPNGSDRSPRRPMRRKLLQALTAGLVLATATG. Transmembrane regions (helical) follow at residues 63–83 and 101–121; these read WAAA…SVFF and LPIE…LFYF. 4 residues coordinate Cu cation: H227, C262, C266, and H270.

The protein belongs to the cytochrome c oxidase subunit 2 family. It depends on Cu cation as a cofactor. Heme is required as a cofactor.

The protein localises to the cell membrane. It carries out the reaction 4 Fe(II)-[cytochrome c] + O2 + 8 H(+)(in) = 4 Fe(III)-[cytochrome c] + 2 H2O + 4 H(+)(out). In terms of biological role, subunits I and II form the functional core of the enzyme complex. Electrons originating in cytochrome c are transferred via heme a and Cu(A) to the binuclear center formed by heme a3 and Cu(B). In Streptomyces coelicolor (strain ATCC BAA-471 / A3(2) / M145), this protein is Probable cytochrome c oxidase subunit 2 (ctaC).